A 444-amino-acid chain; its full sequence is Tol-Pal system protein TolB (444 aa).

The N-terminal stretch at 1 to 19 is a signal peptide; it reads MRNIIYFILLLLFSFKGYA.

Belongs to the TolB family. In terms of assembly, the Tol-Pal system is composed of five core proteins: the inner membrane proteins TolA, TolQ and TolR, the periplasmic protein TolB and the outer membrane protein Pal. They form a network linking the inner and outer membranes and the peptidoglycan layer.

It localises to the periplasm. Part of the Tol-Pal system, which plays a role in outer membrane invagination during cell division and is important for maintaining outer membrane integrity. This is Tol-Pal system protein TolB from Rickettsia akari (strain Hartford).